Here is a 1164-residue protein sequence, read N- to C-terminus: DNA-directed RNA polymerase subunit beta (1164 aa).

It belongs to the RNA polymerase beta chain family. In terms of assembly, the RNAP catalytic core consists of 2 alpha, 1 beta, 1 beta' and 1 omega subunit. When a sigma factor is associated with the core the holoenzyme is formed, which can initiate transcription.

It carries out the reaction RNA(n) + a ribonucleoside 5'-triphosphate = RNA(n+1) + diphosphate. Functionally, DNA-dependent RNA polymerase catalyzes the transcription of DNA into RNA using the four ribonucleoside triphosphates as substrates. The sequence is that of DNA-directed RNA polymerase subunit beta from Saccharopolyspora erythraea (strain ATCC 11635 / DSM 40517 / JCM 4748 / NBRC 13426 / NCIMB 8594 / NRRL 2338).